The following is a 420-amino-acid chain: Tyrosine--tRNA ligase (420 aa).

L-tyrosine is bound at residue Tyr-33. Positions 38–47 (PTGPSLHAGH) match the 'HIGH' region motif. L-tyrosine-binding residues include Tyr-167 and Gln-171. Residues 227 to 231 (KFGKS) carry the 'KMSKS' region motif. Position 230 (Lys-230) interacts with ATP. In terms of domain architecture, S4 RNA-binding spans 352–418 (RTIIDLLVAS…GKKNFAGVQI (67 aa)).

This sequence belongs to the class-I aminoacyl-tRNA synthetase family. TyrS type 1 subfamily. In terms of assembly, homodimer.

It is found in the cytoplasm. It carries out the reaction tRNA(Tyr) + L-tyrosine + ATP = L-tyrosyl-tRNA(Tyr) + AMP + diphosphate + H(+). In terms of biological role, catalyzes the attachment of tyrosine to tRNA(Tyr) in a two-step reaction: tyrosine is first activated by ATP to form Tyr-AMP and then transferred to the acceptor end of tRNA(Tyr). The chain is Tyrosine--tRNA ligase from Corynebacterium glutamicum (strain ATCC 13032 / DSM 20300 / JCM 1318 / BCRC 11384 / CCUG 27702 / LMG 3730 / NBRC 12168 / NCIMB 10025 / NRRL B-2784 / 534).